The primary structure comprises 352 residues: Small ribosomal subunit biogenesis GTPase RsgA 2 (352 aa).

One can recognise a CP-type G domain in the interval 100 to 257; that stretch reads RQDGQIIATN…VIDTPGMREL (158 aa). Residues 147 to 150 and 199 to 207 each bind GTP; these read TKAD and GSSGVGKST. Zn(2+) contacts are provided by Cys-278, Cys-283, His-285, and Cys-291.

The protein belongs to the TRAFAC class YlqF/YawG GTPase family. RsgA subfamily. In terms of assembly, monomer. Associates with 30S ribosomal subunit, binds 16S rRNA. Requires Zn(2+) as cofactor.

It is found in the cytoplasm. In terms of biological role, one of several proteins that assist in the late maturation steps of the functional core of the 30S ribosomal subunit. Helps release RbfA from mature subunits. May play a role in the assembly of ribosomal proteins into the subunit. Circularly permuted GTPase that catalyzes slow GTP hydrolysis, GTPase activity is stimulated by the 30S ribosomal subunit. The polypeptide is Small ribosomal subunit biogenesis GTPase RsgA 2 (Lactiplantibacillus plantarum (strain ATCC BAA-793 / NCIMB 8826 / WCFS1) (Lactobacillus plantarum)).